The following is a 376-amino-acid chain: N-acetyldiaminopimelate deacetylase (376 aa).

Asp-69 is a catalytic residue. Glu-128 acts as the Proton acceptor in catalysis.

It belongs to the peptidase M20A family. N-acetyldiaminopimelate deacetylase subfamily.

It carries out the reaction N-acetyl-(2S,6S)-2,6-diaminopimelate + H2O = (2S,6S)-2,6-diaminopimelate + acetate. It participates in amino-acid biosynthesis; L-lysine biosynthesis via DAP pathway; LL-2,6-diaminopimelate from (S)-tetrahydrodipicolinate (acetylase route): step 3/3. Its function is as follows. Catalyzes the conversion of N-acetyl-diaminopimelate to diaminopimelate and acetate. This Streptococcus pneumoniae serotype 4 (strain ATCC BAA-334 / TIGR4) protein is N-acetyldiaminopimelate deacetylase.